The chain runs to 211 residues: Peroxiredoxin (211 aa).

A Thioredoxin domain is found at P2 to I156. C44 serves as the catalytic Cysteine sulfenic acid (-SOH) intermediate. Residue R119 participates in substrate binding. Cysteines 199 and 205 form a disulfide.

The protein belongs to the peroxiredoxin family. Prx6 subfamily. As to quaternary structure, homodecamer. Pentamer of dimers that assemble into a ring structure.

It is found in the cytoplasm. It catalyses the reaction a hydroperoxide + [thioredoxin]-dithiol = an alcohol + [thioredoxin]-disulfide + H2O. In terms of biological role, thiol-specific peroxidase that catalyzes the reduction of hydrogen peroxide and organic hydroperoxides to water and alcohols, respectively. Plays a role in cell protection against oxidative stress by detoxifying peroxides. This Chlorobaculum tepidum (strain ATCC 49652 / DSM 12025 / NBRC 103806 / TLS) (Chlorobium tepidum) protein is Peroxiredoxin.